A 207-amino-acid polypeptide reads, in one-letter code: uncharacterized protein (207 aa).

In terms of domain architecture, YrdC-like spans 14–201 (ARLINQAVEI…SPVILREGSG (188 aa)).

It belongs to the SUA5 family.

This is an uncharacterized protein from Haemophilus influenzae (strain ATCC 51907 / DSM 11121 / KW20 / Rd).